A 207-amino-acid chain; its full sequence is Guanylate kinase (207 aa).

In terms of domain architecture, Guanylate kinase-like spans Gly-4–Arg-184. An ATP-binding site is contributed by Ala-11–Ser-18.

The protein belongs to the guanylate kinase family.

The protein resides in the cytoplasm. The enzyme catalyses GMP + ATP = GDP + ADP. It carries out the reaction dZMP + ATP = dZDP + ADP. The protein operates within purine metabolism. Essential for recycling GMP and indirectly, cGMP. Functionally, (Microbial infection) Catalyzes the phosphorylation of dZMP to dZDP, when the bacterium is infected by a phage that produces the substrate for the synthesis of dZTP (2- amino-2'-deoxyadenosine 5'-triphosphate), which is then used by the phage as a DNA polymerase substrate. The protein is Guanylate kinase of Salmonella choleraesuis (strain SC-B67).